The following is a 571-amino-acid chain: Sulfite reductase [NADPH] hemoprotein beta-component (571 aa).

Residues Cys436, Cys442, Cys481, and Cys485 each contribute to the [4Fe-4S] cluster site. Siroheme is bound at residue Cys485.

It belongs to the nitrite and sulfite reductase 4Fe-4S domain family. Alpha(8)-beta(8). The alpha component is a flavoprotein, the beta component is a hemoprotein. Siroheme serves as cofactor. The cofactor is [4Fe-4S] cluster.

It catalyses the reaction hydrogen sulfide + 3 NADP(+) + 3 H2O = sulfite + 3 NADPH + 4 H(+). The protein operates within sulfur metabolism; hydrogen sulfide biosynthesis; hydrogen sulfide from sulfite (NADPH route): step 1/1. Functionally, component of the sulfite reductase complex that catalyzes the 6-electron reduction of sulfite to sulfide. This is one of several activities required for the biosynthesis of L-cysteine from sulfate. In Bacillus velezensis (strain DSM 23117 / BGSC 10A6 / LMG 26770 / FZB42) (Bacillus amyloliquefaciens subsp. plantarum), this protein is Sulfite reductase [NADPH] hemoprotein beta-component.